Reading from the N-terminus, the 276-residue chain is MQGSLSWLLRFVEGQQLSSLPRQSHRITMLAGLSVLNLFPLAALEVGQQWYWEIGNLKLHGQTFATSWFVILLLVIASLAATRNVQRVPSGIQNLMEYVLEFLRDLARNQLGEKEYRPWLPFIGTLFLFIFVSNWSGALLPWKLIHIPDGAELAAPTNDINTTVALALLTSLAYFYAGLRKKGLGYFANYVQPIPVLLPIKILEDFTKPLSLSFRLFGNILADELVVAVLVLLVPLLVPLPLMALGLFTSAIQALVFATLAGAYIHEAIESEGEEH.

Transmembrane regions (helical) follow at residues 27 to 47, 61 to 81, 120 to 140, 159 to 179, 225 to 245, and 246 to 266; these read ITMLAGLSVLNLFPLAALEVG, GQTFATSWFVILLLVIASLAA, LPFIGTLFLFIFVSNWSGALL, DINTTVALALLTSLAYFYAGL, LVVAVLVLLVPLLVPLPLMAL, and GLFTSAIQALVFATLAGAYIH.

This sequence belongs to the ATPase A chain family. F-type ATPases have 2 components, CF(1) - the catalytic core - and CF(0) - the membrane proton channel. CF(1) has five subunits: alpha(3), beta(3), gamma(1), delta(1), epsilon(1). CF(0) has four main subunits: a, b, b' and c.

The protein resides in the cellular thylakoid membrane. Functionally, key component of the proton channel; it plays a direct role in the translocation of protons across the membrane. This Synechocystis sp. (strain ATCC 27184 / PCC 6803 / Kazusa) protein is ATP synthase subunit a.